A 349-amino-acid chain; its full sequence is Protein-glutamate methylesterase/protein-glutamine glutaminase (349 aa).

The Response regulatory domain occupies 5–122 (RVLSVDDSAL…REGMLAYSEM (118 aa)). Asp56 carries the 4-aspartylphosphate modification. Residues 152 to 344 (LLSSEKLIAI…QQMLAKISAG (193 aa)) form the CheB-type methylesterase domain. Active-site residues include Ser164, His190, and Asp286.

It belongs to the CheB family. In terms of processing, phosphorylated by CheA. Phosphorylation of the N-terminal regulatory domain activates the methylesterase activity.

Its subcellular location is the cytoplasm. The catalysed reaction is [protein]-L-glutamate 5-O-methyl ester + H2O = L-glutamyl-[protein] + methanol + H(+). It carries out the reaction L-glutaminyl-[protein] + H2O = L-glutamyl-[protein] + NH4(+). Involved in chemotaxis. Part of a chemotaxis signal transduction system that modulates chemotaxis in response to various stimuli. Catalyzes the demethylation of specific methylglutamate residues introduced into the chemoreceptors (methyl-accepting chemotaxis proteins or MCP) by CheR. Also mediates the irreversible deamidation of specific glutamine residues to glutamic acid. This chain is Protein-glutamate methylesterase/protein-glutamine glutaminase, found in Salmonella typhi.